Reading from the N-terminus, the 245-residue chain is MAQQVSARQPRYKRILLKLSGEALMGSEEFGIDPKVLDRMALEIGQLVGIGVQVGLVIGGGNLFRGAALSAAGMDRVTGDHMGMLATVMNGLAMRDALERSNIPALVMSAISMVGVTDHYDRRKAMRHLNGGEVVIFSAGTGNPFFTTDSAACLRAIEIDADVVLKATKVDGVYTADPFKDPNAEKFERLTYDEVLDRKLGVMDLTAICLCRDQNMPLRVFNMNKPGALLNIVVGGAEGTLIEEG.

18-21 (KLSG) serves as a coordination point for ATP. Glycine 60 lines the UMP pocket. Residues glycine 61 and arginine 65 each coordinate ATP. Residues aspartate 80 and 141–148 (TGNPFFTT) each bind UMP. ATP contacts are provided by threonine 168, tyrosine 174, and aspartate 177.

Belongs to the UMP kinase family. In terms of assembly, homohexamer.

It localises to the cytoplasm. It catalyses the reaction UMP + ATP = UDP + ADP. Its pathway is pyrimidine metabolism; CTP biosynthesis via de novo pathway; UDP from UMP (UMPK route): step 1/1. Its activity is regulated as follows. Inhibited by UTP. Functionally, catalyzes the reversible phosphorylation of UMP to UDP. The protein is Uridylate kinase of Pseudomonas paraeruginosa (strain DSM 24068 / PA7) (Pseudomonas aeruginosa (strain PA7)).